We begin with the raw amino-acid sequence, 253 residues long: MICOS complex subunit mic25 (253 aa).

Positions 1 to 89 are disordered; that stretch reads MGGSESTGRK…GAHKPTAAGV (89 aa). A lipid anchor (N-myristoyl glycine) is attached at glycine 2. Over residues 28-44 the composition is skewed to basic and acidic residues; it reads RLSDEVVNRMKDSDLPS. Positions 48–64 are enriched in low complexity; it reads STSAASGTASAPAAFPS. A coiled-coil region spans residues 94–178; sequence AEEDLYRRYE…EQLSSIEKKN (85 aa). Residues 206–248 enclose the CHCH domain; that stretch reads DPVCMNLQADILKCYSENKQERLNCSNLAKEYRKCVSAAQKNL. 2 consecutive short sequence motifs (cx9C motif) follow at residues 209–219 and 230–240; these read CMNLQADILKC and CSNLAKEYRKC. Cystine bridges form between cysteine 209-cysteine 240 and cysteine 219-cysteine 230.

Belongs to the MICOS complex subunit Mic19 family. Metazoan Mic25 subfamily. As to quaternary structure, component of the mitochondrial contact site and cristae organizing system (MICOS) complex (also known as MINOS or MitOS complex).

The protein resides in the mitochondrion inner membrane. In terms of biological role, component of the MICOS complex, a large protein complex of the mitochondrial inner membrane that plays crucial roles in the maintenance of crista junctions, inner membrane architecture, and formation of contact sites to the outer membrane. This chain is MICOS complex subunit mic25 (chchd6), found in Xenopus tropicalis (Western clawed frog).